The chain runs to 528 residues: Glutamyl-tRNA(Gln) amidotransferase subunit B, mitochondrial (528 aa).

Belongs to the GatB/GatE family. GatB subfamily. In terms of assembly, subunit of the heterotrimeric GatFAB amidotransferase (AdT) complex, composed of A, B and F subunits.

It is found in the mitochondrion. It catalyses the reaction L-glutamyl-tRNA(Gln) + L-glutamine + ATP + H2O = L-glutaminyl-tRNA(Gln) + L-glutamate + ADP + phosphate + H(+). Allows the formation of correctly charged Gln-tRNA(Gln) through the transamidation of misacylated Glu-tRNA(Gln) in the mitochondria. The reaction takes place in the presence of glutamine and ATP through an activated gamma-phospho-Glu-tRNA(Gln). The polypeptide is Glutamyl-tRNA(Gln) amidotransferase subunit B, mitochondrial (Clavispora lusitaniae (strain ATCC 42720) (Yeast)).